A 282-amino-acid chain; its full sequence is Energy-coupling factor transporter ATP-binding protein EcfA1 (282 aa).

The ABC transporter domain occupies 6-243 (VTVKHLSFTY…EVLIKSAGLE (238 aa)). ATP is bound at residue 40–47 (GHNGSGKS).

Belongs to the ABC transporter superfamily. Energy-coupling factor EcfA family. Forms a stable energy-coupling factor (ECF) transporter complex composed of 2 membrane-embedded substrate-binding proteins (S component), 2 ATP-binding proteins (A component) and 2 transmembrane proteins (T component).

It is found in the cell membrane. ATP-binding (A) component of a common energy-coupling factor (ECF) ABC-transporter complex. Unlike classic ABC transporters this ECF transporter provides the energy necessary to transport a number of different substrates. This Lactobacillus johnsonii (strain CNCM I-12250 / La1 / NCC 533) protein is Energy-coupling factor transporter ATP-binding protein EcfA1.